Here is a 146-residue protein sequence, read N- to C-terminus: Cytochrome c-type biogenesis protein CcmE (146 aa).

At 1-8 the chain is on the cytoplasmic side; it reads MHPKRKKR. Residues 9–29 traverse the membrane as a helical; Signal-anchor for type II membrane protein segment; sequence LLIVLAGLAVVAVASGLILNA. At 30-146 the chain is on the periplasmic side; that stretch reads FRSNLVFFHT…IQRAGETVVQ (117 aa). Heme is bound by residues His-124 and Tyr-128.

It belongs to the CcmE/CycJ family.

The protein resides in the cell inner membrane. In terms of biological role, heme chaperone required for the biogenesis of c-type cytochromes. Transiently binds heme delivered by CcmC and transfers the heme to apo-cytochromes in a process facilitated by CcmF and CcmH. This is Cytochrome c-type biogenesis protein CcmE from Laribacter hongkongensis (strain HLHK9).